A 307-amino-acid polypeptide reads, in one-letter code: MSDSRGVLSISTSTTFQGLIQTLNRYWAEQGCVLVQPLDLEVGAGTFHPATFLRALGPEPWNAAYVQPSRRPTDGRYGENPNRLQRYYQYQVAMKPNPDNLQELYLASLQALGIDPLVHDVRFVEDNWESPTLGAWGLGWEVWLNGMEVTQFTYFQQAGGLECKPVLGEVTYGLERLCMYLQSCDNVYDLVWTYGPDGTPVTYGDVYHQNEVEQSAYNFEHANVTELLHTFDACEREAKSLVEAVLPLPAYEKVIKASHCFNLLDARRTISVTERQRYILRIRTLSQEVAKAYYAQREKLGFPNLRR.

Belongs to the class-II aminoacyl-tRNA synthetase family. As to quaternary structure, tetramer of two alpha and two beta subunits.

The protein localises to the cytoplasm. The catalysed reaction is tRNA(Gly) + glycine + ATP = glycyl-tRNA(Gly) + AMP + diphosphate. This chain is Glycine--tRNA ligase alpha subunit, found in Xylella fastidiosa (strain M23).